The sequence spans 38 residues: MTQSNPNDQNVELNRTSLYWGLLLIFVLAVPFSNYFFN.

Residues 17-37 (SLYWGLLLIFVLAVPFSNYFF) traverse the membrane as a helical segment.

It belongs to the PsbL family. As to quaternary structure, PSII is composed of 1 copy each of membrane proteins PsbA, PsbB, PsbC, PsbD, PsbE, PsbF, PsbH, PsbI, PsbJ, PsbK, PsbL, PsbM, PsbT, PsbX, PsbY, PsbZ, Psb30/Ycf12, at least 3 peripheral proteins of the oxygen-evolving complex and a large number of cofactors. It forms dimeric complexes.

It localises to the plastid. The protein localises to the chloroplast thylakoid membrane. Its function is as follows. One of the components of the core complex of photosystem II (PSII). PSII is a light-driven water:plastoquinone oxidoreductase that uses light energy to abstract electrons from H(2)O, generating O(2) and a proton gradient subsequently used for ATP formation. It consists of a core antenna complex that captures photons, and an electron transfer chain that converts photonic excitation into a charge separation. This subunit is found at the monomer-monomer interface and is required for correct PSII assembly and/or dimerization. In Cedrus deodara (Deodar cedar), this protein is Photosystem II reaction center protein L.